A 270-amino-acid polypeptide reads, in one-letter code: Putative hydro-lyase Reut_A2449 (270 aa).

The protein belongs to the D-glutamate cyclase family.

The protein is Putative hydro-lyase Reut_A2449 of Cupriavidus pinatubonensis (strain JMP 134 / LMG 1197) (Cupriavidus necator (strain JMP 134)).